The following is a 166-amino-acid chain: MSGIIEKKKQVVEEIAEKFRASQTAVVVDYRGLDVAEVTALRKELREAGIEFKVYKNTMTRRAVEAVELTDLNDTLTGPTAIAFSNDDVVAPARILNNFKKDHEALEIKGGVIEGQVATLDQIKDLADLPNYEGMVSMLLSVLQAPVRNFAYVTKAVAEQKEEQGA.

The protein belongs to the universal ribosomal protein uL10 family. Part of the ribosomal stalk of the 50S ribosomal subunit. The N-terminus interacts with L11 and the large rRNA to form the base of the stalk. The C-terminus forms an elongated spine to which L12 dimers bind in a sequential fashion forming a multimeric L10(L12)X complex.

Forms part of the ribosomal stalk, playing a central role in the interaction of the ribosome with GTP-bound translation factors. The polypeptide is Large ribosomal subunit protein uL10 (Oceanobacillus iheyensis (strain DSM 14371 / CIP 107618 / JCM 11309 / KCTC 3954 / HTE831)).